A 154-amino-acid polypeptide reads, in one-letter code: Snaclec salmorin subunit A (154 aa).

Residues 1–23 form the signal peptide; that stretch reads MGRFIFVSFGLLVVFLSLSGTGA. Disulfide bonds link Cys-27-Cys-38, Cys-55-Cys-152, and Cys-127-Cys-144. Positions 34 to 153 constitute a C-type lectin domain; it reads NNGHCYQAFN…CGQRNPFVCE (120 aa). Residues Ser-66, Glu-68, and Glu-72 each coordinate Ca(2+). Glu-153 contacts Ca(2+).

It belongs to the snaclec family. Heterodimer of subunits A and B; disulfide-linked. As to expression, expressed by the venom gland.

It localises to the secreted. Functionally, inhibits thrombin-induced fibrinogen clotting and factor Xa-induced prothrombin activation. Binds to thrombin and prothrombin exosites. The protein is Snaclec salmorin subunit A of Gloydius brevicauda (Korean slamosa snake).